A 662-amino-acid chain; its full sequence is Protein translocase subunit SecA 2 (662 aa).

ATP is bound by residues Gln110, 128-132 (GEGKT), and Asp538.

It belongs to the SecA family. As to quaternary structure, monomer and homodimer. Part of the essential Sec protein translocation apparatus which comprises SecA, SecYEG and auxiliary proteins SecDF. Other proteins may also be involved.

It localises to the cell inner membrane. The protein resides in the cytoplasm. The enzyme catalyses ATP + H2O + cellular proteinSide 1 = ADP + phosphate + cellular proteinSide 2.. Functionally, part of the Sec protein translocase complex. Interacts with the SecYEG preprotein conducting channel. Has a central role in coupling the hydrolysis of ATP to the transfer of proteins into and across the cell membrane, serving as an ATP-driven molecular motor driving the stepwise translocation of polypeptide chains across the membrane. This Chlorobium chlorochromatii (strain CaD3) protein is Protein translocase subunit SecA 2.